We begin with the raw amino-acid sequence, 274 residues long: Bis(5'-nucleosyl)-tetraphosphatase, symmetrical (274 aa).

This sequence belongs to the Ap4A hydrolase family.

It catalyses the reaction P(1),P(4)-bis(5'-adenosyl) tetraphosphate + H2O = 2 ADP + 2 H(+). Its function is as follows. Hydrolyzes diadenosine 5',5'''-P1,P4-tetraphosphate to yield ADP. In Shewanella sp. (strain W3-18-1), this protein is Bis(5'-nucleosyl)-tetraphosphatase, symmetrical.